The primary structure comprises 417 residues: Mitochondrial inner membrane i-AAA protease supercomplex subunit MGR1 (417 aa).

Residues 1-28 (MAVFTPPSGNSNSTDHTHTQDDHDKDDN) are disordered. Residues 1–56 (MAVFTPPSGNSNSTDHTHTQDDHDKDDNDIKKFYIRPSLGLKLWGPLVPAPDNLPG) are Mitochondrial intermembrane-facing. Over residues 15-28 (DHTHTQDDHDKDDN) the composition is skewed to basic and acidic residues. Residues 57–73 (LYTLITIQSAVGFFALW) form a helical membrane-spanning segment. The Mitochondrial matrix segment spans residues 74–151 (RLRRLYKLPP…RQSRFVSVRK (78 aa)). The chain crosses the membrane as a helical span at residues 152 to 169 (LLWGLFGSLLLSQSLLEL). The Mitochondrial intermembrane portion of the chain corresponds to 170 to 417 (TRLNFLKYDP…PKALTNEKTH (248 aa)). Residues 391 to 401 (SHTKTPTSTDQ) are compositionally biased toward polar residues. A disordered region spans residues 391 to 417 (SHTKTPTSTDQPLPGPTPKALTNEKTH).

The protein belongs to the MGR1 family. As to quaternary structure, component of the mitochondrial inner membrane i-AAA protease supercomplex composed of MGR1, MGR3 and YME1. With MGR3, forms a subcomplex that binds to YME1 and to substrates to facilitate proteolysis. Interacts directly with YME1.

The protein resides in the mitochondrion inner membrane. In terms of biological role, component of the mitochondrial inner membrane i-AAA protease supercomplex required for mitochondrial inner membrane protein turnover. Together with MGR3, functions in an adapter complex that targets substrates to the i-AAA protease for degradation. Required for growth of cells lacking the mitochondrial genome. This is Mitochondrial inner membrane i-AAA protease supercomplex subunit MGR1 (MGR1) from Saccharomyces cerevisiae (strain ATCC 204508 / S288c) (Baker's yeast).